We begin with the raw amino-acid sequence, 468 residues long: 3-isopropylmalate dehydratase large subunit (468 aa).

Positions 347, 407, and 410 each coordinate [4Fe-4S] cluster.

It belongs to the aconitase/IPM isomerase family. LeuC type 1 subfamily. As to quaternary structure, heterodimer of LeuC and LeuD. [4Fe-4S] cluster is required as a cofactor.

It catalyses the reaction (2R,3S)-3-isopropylmalate = (2S)-2-isopropylmalate. Its pathway is amino-acid biosynthesis; L-leucine biosynthesis; L-leucine from 3-methyl-2-oxobutanoate: step 2/4. In terms of biological role, catalyzes the isomerization between 2-isopropylmalate and 3-isopropylmalate, via the formation of 2-isopropylmaleate. The chain is 3-isopropylmalate dehydratase large subunit from Campylobacter jejuni (strain RM1221).